Consider the following 261-residue polypeptide: Cytochrome c oxidase subunit 3 (261 aa).

The Mitochondrial matrix segment spans residues 1-15 (MTHQTHAYHMVNPSP). A helical membrane pass occupies residues 16 to 34 (WPLTGALSALLMTSGLIMW). At 35 to 40 (FHYNSM) the chain is on the mitochondrial intermembrane side. A helical transmembrane segment spans residues 41–66 (ALLTLGFTTNLLTMYQWWRDVIREGT). The Mitochondrial matrix segment spans residues 67–72 (FQGHHT). The helical transmembrane segment at 73–105 (PIVQKGLRYGMVLFIVSEVFFFAGFFWAFYHSS) threads the bilayer. At 106 to 128 (LAPTPELGGCWPPTGIIPLNPLE) the chain is on the mitochondrial intermembrane side. The helical transmembrane segment at 129–152 (VPLLNTSVLLASGVSITWAHHSLM) threads the bilayer. Topologically, residues 153–155 (EGN) are mitochondrial matrix. The helical transmembrane segment at 156 to 183 (RKHMLQALFITISLGVYFTLLQASEYYE) threads the bilayer. At 184–190 (TSFTISD) the chain is on the mitochondrial intermembrane side. A helical transmembrane segment spans residues 191–223 (GVYGSTFFMATGFHGLHVIIGSTFLIVCFLRQL). Residues 224–232 (YYHFTSNHH) are Mitochondrial matrix-facing. A helical transmembrane segment spans residues 233 to 256 (FGFEAAAWYWHFVDVVWLFLYVSI). Residues 257 to 261 (YWWGS) lie on the Mitochondrial intermembrane side of the membrane.

The protein belongs to the cytochrome c oxidase subunit 3 family. In terms of assembly, component of the cytochrome c oxidase (complex IV, CIV), a multisubunit enzyme composed of 14 subunits. The complex is composed of a catalytic core of 3 subunits MT-CO1, MT-CO2 and MT-CO3, encoded in the mitochondrial DNA, and 11 supernumerary subunits COX4I, COX5A, COX5B, COX6A, COX6B, COX6C, COX7A, COX7B, COX7C, COX8 and NDUFA4, which are encoded in the nuclear genome. The complex exists as a monomer or a dimer and forms supercomplexes (SCs) in the inner mitochondrial membrane with NADH-ubiquinone oxidoreductase (complex I, CI) and ubiquinol-cytochrome c oxidoreductase (cytochrome b-c1 complex, complex III, CIII), resulting in different assemblies (supercomplex SCI(1)III(2)IV(1) and megacomplex MCI(2)III(2)IV(2)).

The protein localises to the mitochondrion inner membrane. It carries out the reaction 4 Fe(II)-[cytochrome c] + O2 + 8 H(+)(in) = 4 Fe(III)-[cytochrome c] + 2 H2O + 4 H(+)(out). Component of the cytochrome c oxidase, the last enzyme in the mitochondrial electron transport chain which drives oxidative phosphorylation. The respiratory chain contains 3 multisubunit complexes succinate dehydrogenase (complex II, CII), ubiquinol-cytochrome c oxidoreductase (cytochrome b-c1 complex, complex III, CIII) and cytochrome c oxidase (complex IV, CIV), that cooperate to transfer electrons derived from NADH and succinate to molecular oxygen, creating an electrochemical gradient over the inner membrane that drives transmembrane transport and the ATP synthase. Cytochrome c oxidase is the component of the respiratory chain that catalyzes the reduction of oxygen to water. Electrons originating from reduced cytochrome c in the intermembrane space (IMS) are transferred via the dinuclear copper A center (CU(A)) of subunit 2 and heme A of subunit 1 to the active site in subunit 1, a binuclear center (BNC) formed by heme A3 and copper B (CU(B)). The BNC reduces molecular oxygen to 2 water molecules using 4 electrons from cytochrome c in the IMS and 4 protons from the mitochondrial matrix. The polypeptide is Cytochrome c oxidase subunit 3 (MT-CO3) (Canis lupus familiaris (Dog)).